A 315-amino-acid chain; its full sequence is Serine/threonine-protein phosphatase PP2A catalytic subunit 2 (315 aa).

Positions 62, 64, 90, and 122 each coordinate Mn(2+). The active-site Proton donor is H123. Mn(2+) is bound by residues H172 and H247. The tract at residues 294 to 315 (QFEPAPRENEPHTTRRVPDYFL) is disordered. Residues 298–315 (APRENEPHTTRRVPDYFL) are compositionally biased toward basic and acidic residues. The residue at position 315 (L315) is a Leucine methyl ester.

It belongs to the PPP phosphatase family. PP-2A subfamily. It depends on Mn(2+) as a cofactor. Post-translationally, reversibly methyl esterified on Leu-315 by leucine carboxyl methyltransferase 1 (PPM1) and protein phosphatase methylesterase 1 (PPE1). Carboxyl methylation influences the affinity of the catalytic subunit for the different regulatory subunits, thereby modulating the PP2A holoenzyme's substrate specificity, enzyme activity and cellular localization.

The enzyme catalyses O-phospho-L-seryl-[protein] + H2O = L-seryl-[protein] + phosphate. It catalyses the reaction O-phospho-L-threonyl-[protein] + H2O = L-threonyl-[protein] + phosphate. This Paramecium tetraurelia protein is Serine/threonine-protein phosphatase PP2A catalytic subunit 2 (Ppn2).